A 353-amino-acid polypeptide reads, in one-letter code: Protein MGF 360-9L (353 aa).

It belongs to the asfivirus MGF 360 family. As to quaternary structure, interacts with host STAT1; this interaction mediates STAT1 degradation through apoptosis. Interacts with host STAT2; this interaction mediates STAT2 degradation through the proteasome.

The protein localises to the host cytoplasm. Its function is as follows. Plays a role in virus cell tropism, and may be required for efficient virus replication in macrophages. In addition, inhibits IFN-beta-induced IFN-stimulated genes (ISGs) transcription. Mechanistically, degrades host STAT1 and STAT2 through apoptosis and ubiquitin-proteasome pathways respectively. This African swine fever virus (isolate Tick/Malawi/Lil 20-1/1983) (ASFV) protein is Protein MGF 360-9L.